The following is a 1059-amino-acid chain: MSLHAARGGPHEDLSWSAIGRRAPRDVVTFGDREGGGGMRSAQQGPGAVRVDEASSASTFRELDEAFLQTQTKIWLGEVLHLRFGEDALVADLLADGELLFQVSKVLWKMLLKNNREQLKQSKVYIYERLSFGRSSGKYMPYSKVDSFLKICQILGLAGIDLFTPSDVVEKRNVRKVCICIRSVSKKSLILHLNVPDFDVVTYTISMPNYVVGGIRRNLEQTQYSSSSSSGYSPCARSKVLQQQIIFGGQNDQHEDTHYDSDEAESKLSLLEPEDSVNEDNFAAVLSQFNDAHNKGSEGYGESGCGKHGEKSLAESVGSLNIGIIDFEFMDSTPLIHDKESCSLLEPEDSVNEDNFAAVLSKFNDAPNKESKGYGESGRGKHGEKSLAESVGSLNIGIVDSEFMDSSPLIHDKESCSPLEPEGSVNEDNFTAVLSQFNDAPNKESEGYGESGCGKHGEKSLVESVGSLNIGIVDSEFMDSSPLIHDKESCSPLEPEDSVNEDNFAAVLSQFNDAPNKESEGYGESGRGKHGEKSLAESVGSLNIGIIDSEFMDSSPLIHDKESCFPLEPEGSVNEDNFTAVLSQFNDAPNKESEGYGESGCGKHGEKSLVESVGSLNIGIVDSEFMDSSPLIHDKESCSPLEPEDSVNEDNFTAVLSQFNDAPNKESEAYGESGCGKHGENSLDESVGSLNIGVIDSEFMDSSPLIHDKESCSPLEPEDSVNEDNFAAVLSQYSDGPNEGNEGYGESGHYKHEEKSLDESVGSLTIGIIDSEFMDSSRPIHDKESCSTGSAADQCSRTIPAKYELSSEESDSTGSHLVFDSGKNYLELNNHSVTDLERIYNGHATSVDQYVRGNGETLADHPKKEEAGLQKDTGTIAQHRDTLACDGESVCSSCEEPRRGLNGEPSDFSSESHSRLTPTHNTGGKLSMVSEHPVHNMESDMTGMASDSTNPELNPEASTRNEMDGSRSTDNPVEPENVAQDSATRGRPEGDAPRSGKGVLRSVAGGITLVGAVFFMFHLSAALLQKKQGGKLCDGHTISFGKICSEQRKGQEHGQRKRP.

A run of 7 repeats spans residues 269 to 342 (SLLE…KESC), 343 to 416 (SLLE…KESC), 417 to 490 (SPLE…KESC), 491 to 564 (SPLE…KESC), 565 to 638 (FPLE…KESC), 639 to 712 (SPLE…KESC), and 713 to 786 (SPLE…KESC). A 7 X approximate repeats region spans residues 269–786 (SLLEPEDSVN…SRPIHDKESC (518 aa)). Residues 511–534 (FNDAPNKESEGYGESGRGKHGEKS) form a disordered region. Residues 515-534 (PNKESEGYGESGRGKHGEKS) show a composition bias toward basic and acidic residues. Disordered stretches follow at residues 732 to 756 (QYSD…EEKS), 856 to 875 (ETLA…DTGT), and 889 to 998 (SVCS…SGKG). Residues 858 to 869 (LADHPKKEEAGL) show a composition bias toward basic and acidic residues. Polar residues-rich tracts occupy residues 907-924 (DFSS…NTGG) and 945-958 (ASDS…PEAS). The span at 984-994 (TRGRPEGDAPR) shows a compositional bias: basic and acidic residues. The chain crosses the membrane as a helical span at residues 1003-1023 (VAGGITLVGAVFFMFHLSAAL).

In terms of assembly, homodimer. Interacts (via N-terminus) with FL1 (via C-terminus), HIP, 19 kDa alpha-zein (AC P06677), 22 kDa alpha-zein (AC O48966), 16 kDa gamma-zein (AC P08031) and 50 kDa gamma-zein (AC C0P381). In terms of tissue distribution, expressed in kernels.

It localises to the endoplasmic reticulum membrane. In terms of biological role, cereal endosperm protein required for the ring-shaped distribution of 22 kDa alpha- and 16 kDa gamma-zeins in protein bodies. The polypeptide is Protein OPAQUE10 (Zea mays (Maize)).